The following is a 235-amino-acid chain: Sugar fermentation stimulation protein homolog (235 aa).

This sequence belongs to the SfsA family.

The sequence is that of Sugar fermentation stimulation protein homolog from Nitrosococcus oceani (strain ATCC 19707 / BCRC 17464 / JCM 30415 / NCIMB 11848 / C-107).